The primary structure comprises 262 residues: Small ribosomal subunit protein uS2 (262 aa).

A disordered region spans residues Asn-240–Asn-262. The span at Glu-243–Glu-254 shows a compositional bias: acidic residues.

Belongs to the universal ribosomal protein uS2 family.

In Staphylococcus haemolyticus (strain JCSC1435), this protein is Small ribosomal subunit protein uS2.